We begin with the raw amino-acid sequence, 585 residues long: Vacuolar protein 8 (585 aa).

Residue Gly2 is the site of N-myristoyl glycine attachment. S-palmitoyl cysteine attachment occurs at residues Cys4, Cys5, and Cys7. ARM repeat units lie at residues 39–76 (NRSDVDFFSNGPLRALSTLVYSENIDLQRSAALAFAEI), 77–116 (TEKDVREVNRDVLEPILILLQSADSEVQRAACGALGNLAV), 118–157 (TENKILIVEMGGLEPLIRQMMSTNIEVQCNAVGCITNLAT), 159–198 (DDNKSKIAKSGALIPLTKLAKSKDIRVQRNATGALLNMTH), 200–239 (GENRQELVNAGAVPVLVSLLSNEDADVQYYCTTALSNIAV), 243–282 (NRKKLASTEPKLVGQLVHLMDSPSPRVQCQATLALRNLAS), 284–323 (SGYQVEIVRAGGLPHLVQLLTCNHQPLVLAAVACIRNISI), 325–365 (PLNE…NLAA), and 409–448 (DDLKPKLYESHIIDVLIPLTFSENGEVCGNSAAALANLCS). Positions 531–562 (QIGQTTTTTTTNITNNNTNTNTNTNTTTSTSN) are enriched in low complexity. The disordered stretch occupies residues 531–565 (QIGQTTTTTTTNITNNNTNTNTNTNTTTSTSNEDQ).

Belongs to the beta-catenin family.

It is found in the vacuole membrane. Functions in both vacuole inheritance and protein targeting from the cytoplasm to vacuole. Vacuole inheritance has a role in the regulation of hyphal cell division. The sequence is that of Vacuolar protein 8 (VAC8) from Candida albicans (strain SC5314 / ATCC MYA-2876) (Yeast).